Consider the following 159-residue polypeptide: Capsid protein (159 aa).

Serine 2 bears the N-acetylserine; by host mark.

The protein belongs to the virgaviridae capsid protein family.

It localises to the virion. Capsid protein self-assembles to form rod-shaped virions about 18 nm in diameter with a central canal enclosing the viral genomic RNA. The protein is Capsid protein (CP) of Nicotiana tabacum (Common tobacco).